A 686-amino-acid chain; its full sequence is Hexamerin 70c (686 aa).

The signal sequence occupies residues 1-19 (MLSKVVLLVALAAICGAQG). In terms of domain architecture, Hemocyanin N-terminal spans 32–155 (FLHKQKKIFD…IAVLYRPDTK (124 aa)). Residues 161 to 431 (AIYEIYPNYF…MLYQNILSYF (271 aa)) enclose the Hemocyanin middle domain. Asn-205 and Asn-662 each carry an N-linked (GlcNAc...) asparagine glycan. A Hemocyanin C-terminal domain is found at 440-676 (QYSQSELQMP…NMYFKDVFIY (237 aa)).

This sequence belongs to the hemocyanin/hexamerin family. In terms of assembly, probable homohexamer. As to expression, expressed in the fat body and secreted into the hemolymph (at protein level). Present in trophocytes and oenocytes of the fat body (at protein level). Not expressed in ovary or testis.

Its subcellular location is the secreted. The protein localises to the nucleus. It is found in the cytoplasm. The protein resides in the cytoplasmic granule. In terms of biological role, storage protein that may function as a nutrient supply to compensate for lack of dietary proteins during metamorphosis and egg production. This Apis mellifera (Honeybee) protein is Hexamerin 70c.